The following is a 427-amino-acid chain: Enolase (427 aa).

Position 163 (Gln-163) interacts with (2R)-2-phosphoglycerate. The active-site Proton donor is the Glu-205. Mg(2+) is bound by residues Asp-242, Glu-283, and Asp-310. Positions 335, 364, 365, and 386 each coordinate (2R)-2-phosphoglycerate. The active-site Proton acceptor is Lys-335.

The protein belongs to the enolase family. Mg(2+) serves as cofactor.

It is found in the cytoplasm. The protein resides in the secreted. It localises to the cell surface. It carries out the reaction (2R)-2-phosphoglycerate = phosphoenolpyruvate + H2O. It functions in the pathway carbohydrate degradation; glycolysis; pyruvate from D-glyceraldehyde 3-phosphate: step 4/5. Functionally, catalyzes the reversible conversion of 2-phosphoglycerate (2-PG) into phosphoenolpyruvate (PEP). It is essential for the degradation of carbohydrates via glycolysis. The polypeptide is Enolase (Salinispora arenicola (strain CNS-205)).